Consider the following 371-residue polypeptide: Chaperone protein DnaJ (371 aa).

A J domain is found at D4–G68. Residues G134–Q212 form a CR-type zinc finger. Residues C147, C150, C164, C167, C186, C189, C200, and C203 each contribute to the Zn(2+) site. CXXCXGXG motif repeat units lie at residues C147–G154, C164–G171, C186–G193, and C200–G207.

The protein belongs to the DnaJ family. Homodimer. Zn(2+) serves as cofactor.

The protein resides in the cytoplasm. Functionally, participates actively in the response to hyperosmotic and heat shock by preventing the aggregation of stress-denatured proteins and by disaggregating proteins, also in an autonomous, DnaK-independent fashion. Unfolded proteins bind initially to DnaJ; upon interaction with the DnaJ-bound protein, DnaK hydrolyzes its bound ATP, resulting in the formation of a stable complex. GrpE releases ADP from DnaK; ATP binding to DnaK triggers the release of the substrate protein, thus completing the reaction cycle. Several rounds of ATP-dependent interactions between DnaJ, DnaK and GrpE are required for fully efficient folding. Also involved, together with DnaK and GrpE, in the DNA replication of plasmids through activation of initiation proteins. This chain is Chaperone protein DnaJ, found in Rickettsia akari (strain Hartford).